The sequence spans 576 residues: Lysine--tRNA ligase, mitochondrial (576 aa).

The transit peptide at 1 to 30 directs the protein to the mitochondrion; it reads MNVLLKRRSLTFAPRWLWCKCRSSRSRPYS.

This sequence belongs to the class-II aminoacyl-tRNA synthetase family.

The protein localises to the mitochondrion matrix. The catalysed reaction is tRNA(Lys) + L-lysine + ATP = L-lysyl-tRNA(Lys) + AMP + diphosphate. Functionally, catalyzes the attachment of lysine to tRNA(Lys) in the mitochondrion. This is Lysine--tRNA ligase, mitochondrial (MSK1) from Saccharomyces cerevisiae (strain ATCC 204508 / S288c) (Baker's yeast).